Here is a 284-residue protein sequence, read N- to C-terminus: F-box protein PP2-B13 (284 aa).

An F-box domain is found at 1-44 (MMMLPEACVANILAFTSPADAFSSSEVSSVFRLAGDSDFVWEKF).

The protein is F-box protein PP2-B13 (PP2B13) of Arabidopsis thaliana (Mouse-ear cress).